The sequence spans 274 residues: tRNA-cytidine(32) 2-sulfurtransferase (274 aa).

Residues 40 to 45 (SGGKDS) carry the PP-loop motif motif. [4Fe-4S] cluster is bound by residues Cys115, Cys118, and Cys206.

The protein belongs to the TtcA family. Homodimer. Mg(2+) is required as a cofactor. Requires [4Fe-4S] cluster as cofactor.

Its subcellular location is the cytoplasm. The catalysed reaction is cytidine(32) in tRNA + S-sulfanyl-L-cysteinyl-[cysteine desulfurase] + AH2 + ATP = 2-thiocytidine(32) in tRNA + L-cysteinyl-[cysteine desulfurase] + A + AMP + diphosphate + H(+). Its pathway is tRNA modification. Its function is as follows. Catalyzes the ATP-dependent 2-thiolation of cytidine in position 32 of tRNA, to form 2-thiocytidine (s(2)C32). The sulfur atoms are provided by the cysteine/cysteine desulfurase (IscS) system. The sequence is that of tRNA-cytidine(32) 2-sulfurtransferase from Pseudomonas entomophila (strain L48).